A 373-amino-acid polypeptide reads, in one-letter code: Valienol-1-phosphate guanylyltransferase (373 aa).

Residues G177 and 192-193 (EK) each bind substrate.

The protein belongs to the bacterial/plant glucose-1-phosphate adenylyltransferase family. The cofactor is Mg(2+).

The catalysed reaction is valienol 1-phosphate + GTP + H(+) = GDP-valienol + diphosphate. Functionally, involved in the biosynthesis of the antifungal agent validamycin A. Catalyzes the conversion of valienol 1-phosphate to GDP-valienol and less effectively to ADP-valienol or other NDP derivatives. The protein is Valienol-1-phosphate guanylyltransferase of Streptomyces hygroscopicus subsp. limoneus.